Reading from the N-terminus, the 279-residue chain is Fatty acid metabolism regulator protein (279 aa).

Residues 6–74 form the HTH gntR-type domain; the sequence is KSPAGFAEKY…HGKPTKVNQF (69 aa). The segment at residues 34 to 53 is a DNA-binding region (H-T-H motif); it reads ERELSELIGVTRTTLREVLQ.

As to quaternary structure, homodimer.

Its subcellular location is the cytoplasm. Functionally, multifunctional regulator of fatty acid metabolism. The protein is Fatty acid metabolism regulator protein of Vibrio vulnificus (strain CMCP6).